A 373-amino-acid chain; its full sequence is Mannan endo-1,4-beta-mannosidase A (373 aa).

An N-terminal signal peptide occupies residues 1-17 (MKGLFAFGLGLLSLVNA). Substrate contacts are provided by residues tryptophan 81, asparagine 193, and 194 to 196 (EPR). Residue glutamate 194 is the Proton donor/acceptor of the active site. Residues cysteine 197 and cysteine 200 are joined by a disulfide bond. Glutamate 230, tyrosine 267, and tryptophan 271 together coordinate substrate. Cysteine 289 and cysteine 296 form a disulfide bridge. Glutamate 300 (nucleophile) is an active-site residue. A disulfide bond links cysteine 308 and cysteine 359. Tryptophan 332 lines the substrate pocket.

Belongs to the glycosyl hydrolase 5 (cellulase A) family. Monomer. In terms of processing, not glycosylated.

It localises to the secreted. It carries out the reaction Random hydrolysis of (1-&gt;4)-beta-D-mannosidic linkages in mannans, galactomannans and glucomannans.. Endo-1,4-mannanase that catalyzes the random hydrolysis of (1-&gt;4)-beta-D-mannosidic linkages in mannans and heteromannans. It is a crucial enzyme for depolymerization of seed galactomannans and wood galactoglucomannans. Hydrolyzes structurally different mannan polysaccharides, such as galactomannans, glucomannans, and beta-1,4-mannans from different sources, yielding principally mannobiose. Also has transglycosylation activity. The protein is Mannan endo-1,4-beta-mannosidase A of Podospora anserina (strain S / ATCC MYA-4624 / DSM 980 / FGSC 10383) (Pleurage anserina).